The following is a 149-amino-acid chain: Protein-export protein SecB (149 aa).

Belongs to the SecB family. Homotetramer, a dimer of dimers. One homotetramer interacts with 1 SecA dimer.

The protein localises to the cytoplasm. Its function is as follows. One of the proteins required for the normal export of preproteins out of the cell cytoplasm. It is a molecular chaperone that binds to a subset of precursor proteins, maintaining them in a translocation-competent state. It also specifically binds to its receptor SecA. In Hydrogenovibrio crunogenus (strain DSM 25203 / XCL-2) (Thiomicrospira crunogena), this protein is Protein-export protein SecB.